Here is a 247-residue protein sequence, read N- to C-terminus: Carboxy-S-adenosyl-L-methionine synthase (247 aa).

Residues Tyr-40, 65–67 (GSS), 90–91 (DN), 122–123 (DI), Asn-137, and Arg-204 contribute to the S-adenosyl-L-methionine site.

Belongs to the class I-like SAM-binding methyltransferase superfamily. Cx-SAM synthase family. Homodimer.

The catalysed reaction is prephenate + S-adenosyl-L-methionine = carboxy-S-adenosyl-L-methionine + 3-phenylpyruvate + H2O. Its function is as follows. Catalyzes the conversion of S-adenosyl-L-methionine (SAM) to carboxy-S-adenosyl-L-methionine (Cx-SAM). This is Carboxy-S-adenosyl-L-methionine synthase from Pseudomonas fluorescens (strain SBW25).